The following is a 271-amino-acid chain: Glutamate racemase (271 aa).

Residues 12–13 (DS) and 44–45 (YG) each bind substrate. Catalysis depends on Cys75, which acts as the Proton donor/acceptor. Position 76 to 77 (76 to 77 (NT)) interacts with substrate. The active-site Proton donor/acceptor is Cys185. Residue 186 to 187 (TH) coordinates substrate.

Belongs to the aspartate/glutamate racemases family.

The catalysed reaction is L-glutamate = D-glutamate. It functions in the pathway cell wall biogenesis; peptidoglycan biosynthesis. In terms of biological role, provides the (R)-glutamate required for cell wall biosynthesis. The polypeptide is Glutamate racemase (Mycobacterium marinum (strain ATCC BAA-535 / M)).